We begin with the raw amino-acid sequence, 323 residues long: Beta-ketoacyl-[acyl-carrier-protein] synthase III (323 aa).

Active-site residues include Cys113 and His250. An ACP-binding region spans residues 251–255; sequence QANRR. Asn280 is a catalytic residue.

Belongs to the thiolase-like superfamily. FabH family. In terms of assembly, homodimer.

The protein resides in the cytoplasm. It catalyses the reaction malonyl-[ACP] + acetyl-CoA + H(+) = 3-oxobutanoyl-[ACP] + CO2 + CoA. Its pathway is lipid metabolism; fatty acid biosynthesis. In terms of biological role, catalyzes the condensation reaction of fatty acid synthesis by the addition to an acyl acceptor of two carbons from malonyl-ACP. Catalyzes the first condensation reaction which initiates fatty acid synthesis and may therefore play a role in governing the total rate of fatty acid production. Possesses both acetoacetyl-ACP synthase and acetyl transacylase activities. Its substrate specificity determines the biosynthesis of branched-chain and/or straight-chain of fatty acids. The sequence is that of Beta-ketoacyl-[acyl-carrier-protein] synthase III from Sinorhizobium medicae (strain WSM419) (Ensifer medicae).